The sequence spans 204 residues: Salt stress root protein RS1 (204 aa).

The segment at 128–204 (FVPKEEPKPE…AAPAAEPEKQ (77 aa)) is disordered. Residues 147–161 (TSREVAVEEEKKEEE) show a composition bias toward basic and acidic residues. Over residues 164 to 180 (PAEPAAAAAEAAAPSTE) the composition is skewed to low complexity. Residues 182–192 (VEEKKEEEKPA) are compositionally biased toward basic and acidic residues. Low complexity predominate over residues 193-204 (EAAAPAAEPEKQ).

Belongs to the DREPP family.

This is Salt stress root protein RS1 from Oryza sativa subsp. indica (Rice).